A 280-amino-acid polypeptide reads, in one-letter code: 4-diphosphocytidyl-2-C-methyl-D-erythritol kinase (280 aa).

Lys-8 is an active-site residue. 91-101 (PVAAGLAGGST) is a binding site for ATP. Residue Asp-133 is part of the active site.

Belongs to the GHMP kinase family. IspE subfamily.

The enzyme catalyses 4-CDP-2-C-methyl-D-erythritol + ATP = 4-CDP-2-C-methyl-D-erythritol 2-phosphate + ADP + H(+). It participates in isoprenoid biosynthesis; isopentenyl diphosphate biosynthesis via DXP pathway; isopentenyl diphosphate from 1-deoxy-D-xylulose 5-phosphate: step 3/6. In terms of biological role, catalyzes the phosphorylation of the position 2 hydroxy group of 4-diphosphocytidyl-2C-methyl-D-erythritol. The chain is 4-diphosphocytidyl-2-C-methyl-D-erythritol kinase from Clostridium botulinum (strain 657 / Type Ba4).